A 197-amino-acid polypeptide reads, in one-letter code: uncharacterized protein (197 aa).

4 helical membrane passes run 9-29, 67-87, 104-124, and 160-180; these read IYIL…RFIL, LASL…ILML, IIAV…ISVI, and GLDL…MLVI.

Belongs to the YggT family.

The protein localises to the cell membrane. This is an uncharacterized protein from Pseudomonas aeruginosa (strain ATCC 15692 / DSM 22644 / CIP 104116 / JCM 14847 / LMG 12228 / 1C / PRS 101 / PAO1).